The following is a 328-amino-acid chain: Phosphate acetyltransferase (328 aa).

This sequence belongs to the phosphate acetyltransferase and butyryltransferase family.

It is found in the cytoplasm. The enzyme catalyses acetyl-CoA + phosphate = acetyl phosphate + CoA. The protein operates within metabolic intermediate biosynthesis; acetyl-CoA biosynthesis; acetyl-CoA from acetate: step 2/2. The polypeptide is Phosphate acetyltransferase (pta) (Staphylococcus aureus (strain MSSA476)).